A 113-amino-acid chain; its full sequence is Hydrogenase maturation factor HypA 1 (113 aa).

His2 provides a ligand contact to Ni(2+). The Zn(2+) site is built by Cys73, Cys76, Cys89, and Cys92.

The protein belongs to the HypA/HybF family.

Its function is as follows. Involved in the maturation of [NiFe] hydrogenases. Required for nickel insertion into the metal center of the hydrogenase. This Bradyrhizobium diazoefficiens (strain JCM 10833 / BCRC 13528 / IAM 13628 / NBRC 14792 / USDA 110) protein is Hydrogenase maturation factor HypA 1.